Consider the following 176-residue polypeptide: Large ribosomal subunit protein uL6 (176 aa).

This sequence belongs to the universal ribosomal protein uL6 family. Part of the 50S ribosomal subunit.

In terms of biological role, this protein binds to the 23S rRNA, and is important in its secondary structure. It is located near the subunit interface in the base of the L7/L12 stalk, and near the tRNA binding site of the peptidyltransferase center. This chain is Large ribosomal subunit protein uL6, found in Lacticaseibacillus paracasei (strain ATCC 334 / BCRC 17002 / CCUG 31169 / CIP 107868 / KCTC 3260 / NRRL B-441) (Lactobacillus paracasei).